Consider the following 225-residue polypeptide: Immune-associated nucleotide-binding protein 1 (225 aa).

Residues 6-214 (CPVTNLLLLG…YTENMHRKIK (209 aa)) enclose the AIG1-type G domain. The segment at 15-22 (GRSENGKS) is G1. 15 to 23 (GRSENGKSS) lines the GTP pocket. Residues 42 to 46 (DMDQR) form a G2 region. The interval 64–67 (DTPG) is G3. Residues 134–137 (TGGD) form a G4 region. A G5 region spans residues 173–175 (NNK). Position 174 (N174) interacts with GTP.

The protein belongs to the TRAFAC class TrmE-Era-EngA-EngB-Septin-like GTPase superfamily. AIG1/Toc34/Toc159-like paraseptin GTPase family. IAN subfamily. As to expression, mostly expressed in pollen.

The sequence is that of Immune-associated nucleotide-binding protein 1 from Arabidopsis thaliana (Mouse-ear cress).